Consider the following 210-residue polypeptide: NAD(P)H-hydrate epimerase (210 aa).

One can recognise a YjeF N-terminal domain in the interval 11 to 210; sequence AHNFDDYTIN…TVADIGIYEP (200 aa). 60-64 provides a ligand contact to (6S)-NADPHX; the sequence is NNGGD. 2 residues coordinate K(+): Asn-61 and Asp-123. Residues 127-133 and Asp-156 each bind (6S)-NADPHX; that span reads GVGLSRD. Thr-159 is a K(+) binding site.

This sequence belongs to the NnrE/AIBP family. It depends on K(+) as a cofactor.

The catalysed reaction is (6R)-NADHX = (6S)-NADHX. The enzyme catalyses (6R)-NADPHX = (6S)-NADPHX. Catalyzes the epimerization of the S- and R-forms of NAD(P)HX, a damaged form of NAD(P)H that is a result of enzymatic or heat-dependent hydration. This is a prerequisite for the S-specific NAD(P)H-hydrate dehydratase to allow the repair of both epimers of NAD(P)HX. This chain is NAD(P)H-hydrate epimerase, found in Oenococcus oeni (strain ATCC BAA-331 / PSU-1).